A 1420-amino-acid chain; its full sequence is Protein NPAT (1420 aa).

An interaction with MIZF region spans residues 1 to 319 (MLLPSDVARL…EEAIQDILEQ (319 aa)). One can recognise a LisH domain in the interval 3–35 (LPSDVARLVLGYLQQENLTSTCQTFILESSNLK). Required for activation of histone gene transcription and interaction with MIZF regions lie at residues 5 to 25 (SDVA…STCQ) and 121 to 145 (KRQR…YASG). A compositionally biased stretch (polar residues) spans 179–190 (QPQSTVTNTAGE). Residues 179-236 (QPQSTVTNTAGESLNIIPGPQERKTQTSLMSPGRRKSESQKKSLTSSGPHSSRNFQDP) are disordered. Phosphoserine is present on Ser209. Over residues 220 to 235 (KSLTSSGPHSSRNFQD) the composition is skewed to polar residues. The tract at residues 263-339 (KLAENINKFL…FDLFDYGKTK (77 aa)) is mediates transcriptional activation. The span at 534-573 (SQSTPLTTKPSKSQLCENSNNIIKVKTNPQASESADSSET) shows a compositional bias: polar residues. 3 disordered regions span residues 534-612 (SQST…GESL), 625-670 (EEPA…KDGD), and 696-727 (KNNN…NSTE). Residues Ser552 and Ser598 each carry the phosphoserine modification. A required for acceleration of G1 phase region spans residues 628–652 (APSDKQLSNDAASVDLNPTESKTEP). The segment covering 632 to 658 (KQLSNDAASVDLNPTESKTEPLQSASA) has biased composition (polar residues). The segment covering 697-712 (NNNSLSSESGGSVGVS) has biased composition (low complexity). A compositionally biased stretch (polar residues) spans 713–727 (PETQNTDGKTSNSTE). Phosphoserine; by CDK2 is present on residues Ser771 and Ser773. Required for acceleration of G1 phase regions lie at residues 822 to 847 (QNED…IQLM) and 1033 to 1048 (KMED…RVAP). 3 disordered regions span residues 1089 to 1190 (ASFS…NGSL), 1202 to 1234 (LTKK…KPAS), and 1249 to 1297 (SPAN…SMPR). Ser1096 carries the phosphoserine; by CDK2 modification. Residues Lys1112 and Lys1144 each participate in a glycyl lysine isopeptide (Lys-Gly) (interchain with G-Cter in SUMO2) cross-link. Basic and acidic residues-rich tracts occupy residues 1135–1146 (TVKEVQSEKKVS) and 1154–1177 (SLHK…KNAD). Ser1146 is modified (phosphoserine). Polar residues predominate over residues 1205–1219 (KQATPSNNKNATSVG). An N6-acetyllysine modification is found at Lys1223. A required for acceleration of G1 phase region spans residues 1223–1247 (KDQKQEQSKPASSLIGAEILQDVPI). Position 1249 is a phosphoserine (Ser1249). Position 1264 is a phosphothreonine; by CDK2 (Thr1264). A compositionally biased stretch (basic and acidic residues) spans 1270–1279 (GEKHKEEPSD). Residue Lys1274 forms a Glycyl lysine isopeptide (Lys-Gly) (interchain with G-Cter in SUMO2) linkage. Positions 1319–1342 (ENSVSMAAHTLMILSRAAIARTTA) are required for acceleration of G1 phase. Phosphothreonine; by CDK2 is present on Thr1343. Residues 1348–1400 (NTQQFRTSSRSTTKKRKIEELDECERNSRTSGKNLANSSVPMKKKKIKKKKLP) are disordered. A compositionally biased stretch (polar residues) spans 1376-1387 (RTSGKNLANSSV). The span at 1389 to 1399 (MKKKKIKKKKL) shows a compositional bias: basic residues.

Belongs to the NPAT family. As to quaternary structure, interacts with the cylin/CDK complexes CCNE1/CDK2 and CCNA1/CDK2. Interacts with BZW1, CASP8AP2, CREBBP, MIZF and YY1. Interacts with the RUVBL1, RUVBL2 and TRRAP subunits of the NuA4 complex. May also interact with GAPDH, NME1, NME2 and STIP1. In terms of processing, phosphorylated at Ser-771, Ser-773, Ser-1096, Thr-1264 and Thr-1343 by CCNE1/CDK2 at G1-S transition and until prophase, which promotes association with histone gene clusters and stimulates activation of histone transcription. Also phosphorylated by CCNA1/CDK2 in vitro.

The protein localises to the nucleus. Required for progression through the G1 and S phases of the cell cycle and for S phase entry. Activates transcription of the histone H2A, histone H2B, histone H3 and histone H4 genes in conjunction with MIZF. Also positively regulates the ATM, MIZF and PRKDC promoters. Transcriptional activation may be accomplished at least in part by the recruitment of the NuA4 histone acetyltransferase (HAT) complex to target gene promoters. Required for early embryonic development. In Mus musculus (Mouse), this protein is Protein NPAT (Npat).